Consider the following 178-residue polypeptide: SsrA-binding protein (178 aa).

The tract at residues 1–28 is disordered; the sequence is MAKKSTPVDSGRSKGKKASAPRGGGPAV.

It belongs to the SmpB family.

It localises to the cytoplasm. Functionally, required for rescue of stalled ribosomes mediated by trans-translation. Binds to transfer-messenger RNA (tmRNA), required for stable association of tmRNA with ribosomes. tmRNA and SmpB together mimic tRNA shape, replacing the anticodon stem-loop with SmpB. tmRNA is encoded by the ssrA gene; the 2 termini fold to resemble tRNA(Ala) and it encodes a 'tag peptide', a short internal open reading frame. During trans-translation Ala-aminoacylated tmRNA acts like a tRNA, entering the A-site of stalled ribosomes, displacing the stalled mRNA. The ribosome then switches to translate the ORF on the tmRNA; the nascent peptide is terminated with the 'tag peptide' encoded by the tmRNA and targeted for degradation. The ribosome is freed to recommence translation, which seems to be the essential function of trans-translation. This chain is SsrA-binding protein, found in Corynebacterium urealyticum (strain ATCC 43042 / DSM 7109).